The sequence spans 349 residues: Phosphoribosylformylglycinamidine cyclo-ligase (349 aa).

This sequence belongs to the AIR synthase family.

The protein localises to the cytoplasm. It carries out the reaction 2-formamido-N(1)-(5-O-phospho-beta-D-ribosyl)acetamidine + ATP = 5-amino-1-(5-phospho-beta-D-ribosyl)imidazole + ADP + phosphate + H(+). Its pathway is purine metabolism; IMP biosynthesis via de novo pathway; 5-amino-1-(5-phospho-D-ribosyl)imidazole from N(2)-formyl-N(1)-(5-phospho-D-ribosyl)glycinamide: step 2/2. This is Phosphoribosylformylglycinamidine cyclo-ligase from Albidiferax ferrireducens (strain ATCC BAA-621 / DSM 15236 / T118) (Rhodoferax ferrireducens).